Here is a 126-residue protein sequence, read N- to C-terminus: Large ribosomal subunit protein bL19 (126 aa).

This sequence belongs to the bacterial ribosomal protein bL19 family.

In terms of biological role, this protein is located at the 30S-50S ribosomal subunit interface and may play a role in the structure and function of the aminoacyl-tRNA binding site. The protein is Large ribosomal subunit protein bL19 of Prochlorococcus marinus (strain MIT 9312).